Here is a 31-residue protein sequence, read N- to C-terminus: Bacteriocin lactocin-705 (31 aa).

Its function is as follows. Antibacterial activity against several lactic acid bacteria, Listeria, Streptococci, etc. This chain is Bacteriocin lactocin-705, found in Lacticaseibacillus paracasei (Lactobacillus paracasei).